The sequence spans 352 residues: MTIAIGTYQEKRTWFDDADDWLRQDRFVFVGWSGLLLFPCAYFALGGWLTGTTFVTSWYTHGLATSYLEGCNFLTAAVSTPANSMAHSLLFVWGPEAQGDFTRWCQLGGLWAFVALHGAFGLIGFMLRQFEIARSVNLRPYNAIAFSAPIAVFVSVFLIYPLGQSGWFFAPSFGVAAIFRFILFFQGFHNWTLNPFHMMGVAGVLGAALLCAIHGATVENTLFEDGDGANTFRAFNPTQAEETYSMVTANRFWSQIFGVAFSNKRWLHFFMLLVPVTGLWMSAIGVVGLALNLRAYDFVSQEIRAAEDPEFETFYTKNILLNEGIRAWMAAQDQPHERLVFPEEVLPRGNAL.

The residue at position 2 (T2) is an N-acetylthreonine. T2 carries the post-translational modification Phosphothreonine. A helical membrane pass occupies residues 40 to 60 (CAYFALGGWLTGTTFVTSWYT). H117 is a chlorophyll a binding site. A helical transmembrane segment spans residues 124 to 140 (GFMLRQFEIARSVNLRP). Pheophytin a is bound by residues Q129 and N142. The chain crosses the membrane as a helical span at residues 152–165 (VFVSVFLIYPLGQS). H197 is a chlorophyll a binding site. A helical transmembrane segment spans residues 207-227 (AALLCAIHGATVENTLFEDGD). The a plastoquinone site is built by H214 and F261. Position 214 (H214) interacts with Fe cation. H268 is a binding site for Fe cation. A helical transmembrane segment spans residues 278-294 (GLWMSAIGVVGLALNLR).

The protein belongs to the reaction center PufL/M/PsbA/D family. In terms of assembly, PSII is composed of 1 copy each of membrane proteins PsbA, PsbB, PsbC, PsbD, PsbE, PsbF, PsbH, PsbI, PsbJ, PsbK, PsbL, PsbM, PsbT, PsbX, PsbY, PsbZ, Psb30/Ycf12, at least 3 peripheral proteins of the oxygen-evolving complex and a large number of cofactors. It forms dimeric complexes. Requires The D1/D2 heterodimer binds P680, chlorophylls that are the primary electron donor of PSII, and subsequent electron acceptors. It shares a non-heme iron and each subunit binds pheophytin, quinone, additional chlorophylls, carotenoids and lipids. There is also a Cl(-1) ion associated with D1 and D2, which is required for oxygen evolution. The PSII complex binds additional chlorophylls, carotenoids and specific lipids. as cofactor. In terms of processing, phosphorylated in vitro.

The protein localises to the plastid. The protein resides in the chloroplast thylakoid membrane. It catalyses the reaction 2 a plastoquinone + 4 hnu + 2 H2O = 2 a plastoquinol + O2. Photosystem II (PSII) is a light-driven water:plastoquinone oxidoreductase that uses light energy to abstract electrons from H(2)O, generating O(2) and a proton gradient subsequently used for ATP formation. It consists of a core antenna complex that captures photons, and an electron transfer chain that converts photonic excitation into a charge separation. The D1/D2 (PsbA/PsbD) reaction center heterodimer binds P680, the primary electron donor of PSII as well as several subsequent electron acceptors. D2 is needed for assembly of a stable PSII complex. This is Photosystem II D2 protein from Chlamydomonas reinhardtii (Chlamydomonas smithii).